A 188-amino-acid polypeptide reads, in one-letter code: dCTP deaminase (188 aa).

107-112 (KSTYAR) serves as a coordination point for dCTP. The Proton donor/acceptor role is filled by E133. DCTP-binding residues include Q152, Y166, and Q176.

Belongs to the dCTP deaminase family. As to quaternary structure, homotrimer.

It catalyses the reaction dCTP + H2O + H(+) = dUTP + NH4(+). It functions in the pathway pyrimidine metabolism; dUMP biosynthesis; dUMP from dCTP (dUTP route): step 1/2. In terms of biological role, catalyzes the deamination of dCTP to dUTP. The chain is dCTP deaminase from Sulfurovum sp. (strain NBC37-1).